The primary structure comprises 365 residues: Peptide chain release factor 2 (365 aa).

Q249 carries the post-translational modification N5-methylglutamine.

It belongs to the prokaryotic/mitochondrial release factor family. Methylated by PrmC. Methylation increases the termination efficiency of RF2.

Its subcellular location is the cytoplasm. Its function is as follows. Peptide chain release factor 2 directs the termination of translation in response to the peptide chain termination codons UGA and UAA. The sequence is that of Peptide chain release factor 2 from Acholeplasma laidlawii (strain PG-8A).